The following is a 956-amino-acid chain: RNA-binding protein 44 (956 aa).

Residues 301 to 321 (DNTQNNQNQSYNPTEENDHNV) form a disordered region. The RRM domain maps to 750–824 (SLLCITCLPG…HAVQVVHLSG (75 aa)). The disordered stretch occupies residues 831–855 (KPSDLSHSASESHKEDTAGDELRTK). The span at 840–854 (SESHKEDTAGDELRT) shows a compositional bias: basic and acidic residues.

The protein localises to the cytoplasm. In terms of biological role, component of intercellular bridges during meiosis. Intercellular bridges are evolutionarily conserved structures that connect differentiating germ cells. Not required for fertility. In Danio rerio (Zebrafish), this protein is RNA-binding protein 44 (rbm44).